Consider the following 368-residue polypeptide: tRNA-specific 2-thiouridylase MnmA (368 aa).

Residues 11–18 (GMSGGVDS) and Met-37 each bind ATP. The tract at residues 97 to 99 (NPD) is interaction with target base in tRNA. Cys-102 functions as the Nucleophile in the catalytic mechanism. A disulfide bridge links Cys-102 with Cys-199. Gly-127 is a binding site for ATP. The interaction with tRNA stretch occupies residues 149 to 151 (KDQ). Cys-199 (cysteine persulfide intermediate) is an active-site residue. Residues 311 to 312 (RY) are interaction with tRNA.

It belongs to the MnmA/TRMU family. In terms of assembly, interacts with TusE.

The protein resides in the cytoplasm. It catalyses the reaction S-sulfanyl-L-cysteinyl-[protein] + uridine(34) in tRNA + AH2 + ATP = 2-thiouridine(34) in tRNA + L-cysteinyl-[protein] + A + AMP + diphosphate + H(+). Its function is as follows. Catalyzes the 2-thiolation of uridine at the wobble position (U34) of tRNA(Lys), tRNA(Glu) and tRNA(Gln), leading to the formation of s(2)U34, the first step of tRNA-mnm(5)s(2)U34 synthesis. Sulfur is provided by IscS, via a sulfur-relay system. Binds ATP and its substrate tRNAs. The chain is tRNA-specific 2-thiouridylase MnmA from Klebsiella pneumoniae subsp. pneumoniae (strain ATCC 700721 / MGH 78578).